Reading from the N-terminus, the 320-residue chain is MIAPVRWLSRKDVALVNLPFASALNIIEVTLRDHGNGAFENPPKIGIHPRHDALIHAMPGWLPTQRRAGLKWIATYSSNRSVGLPSITGLLVLNDPDTGLPVCVMDAAYLTAVRTAAASAVTSKYLSPSHVRKIAVIGAGIQGLYHVEMLSLVHPAAEFHIVDIDDDAVRLLAQMVRSKARIVPVKEAEIAIRTADVVVTATSQLEEVAFQFSWVKEGSLVLPVHPRGWSEDITTASEVLLADDVAQFASYIMALGSPYRDISRVLGSVSDVITGQVTGRANDSDRIAVFNLGIAVHDVAIGSAIFDIAEQLGLGTIVSY.

This sequence belongs to the ornithine cyclodeaminase/mu-crystallin family.

Functionally, seems to be involved in the nodulation efficiency of R.meliloti GR4 on alfalfa roots. The polypeptide is Nodulation efficiency protein NfeD (Rhizobium meliloti (Ensifer meliloti)).